Here is a 600-residue protein sequence, read N- to C-terminus: Elongation factor 4 (600 aa).

One can recognise a tr-type G domain in the interval 5–187 (KYIRNFSIVA…EIVEKVPAPE (183 aa)). GTP-binding positions include 17–22 (DHGKST) and 134–137 (NKVD).

This sequence belongs to the TRAFAC class translation factor GTPase superfamily. Classic translation factor GTPase family. LepA subfamily.

It is found in the cell membrane. The enzyme catalyses GTP + H2O = GDP + phosphate + H(+). Its function is as follows. Required for accurate and efficient protein synthesis under certain stress conditions. May act as a fidelity factor of the translation reaction, by catalyzing a one-codon backward translocation of tRNAs on improperly translocated ribosomes. Back-translocation proceeds from a post-translocation (POST) complex to a pre-translocation (PRE) complex, thus giving elongation factor G a second chance to translocate the tRNAs correctly. Binds to ribosomes in a GTP-dependent manner. This is Elongation factor 4 from Clostridium perfringens (strain ATCC 13124 / DSM 756 / JCM 1290 / NCIMB 6125 / NCTC 8237 / Type A).